Here is a 319-residue protein sequence, read N- to C-terminus: Beta-ketoacyl-[acyl-carrier-protein] synthase III (319 aa).

Residues Cys113 and His246 contribute to the active site. Residues 247 to 251 (QANRR) are ACP-binding. The active site involves Asn276.

This sequence belongs to the thiolase-like superfamily. FabH family. Homodimer.

The protein localises to the cytoplasm. The catalysed reaction is malonyl-[ACP] + acetyl-CoA + H(+) = 3-oxobutanoyl-[ACP] + CO2 + CoA. It functions in the pathway lipid metabolism; fatty acid biosynthesis. In terms of biological role, catalyzes the condensation reaction of fatty acid synthesis by the addition to an acyl acceptor of two carbons from malonyl-ACP. Catalyzes the first condensation reaction which initiates fatty acid synthesis and may therefore play a role in governing the total rate of fatty acid production. Possesses both acetoacetyl-ACP synthase and acetyl transacylase activities. Its substrate specificity determines the biosynthesis of branched-chain and/or straight-chain of fatty acids. This is Beta-ketoacyl-[acyl-carrier-protein] synthase III from Rhizorhabdus wittichii (strain DSM 6014 / CCUG 31198 / JCM 15750 / NBRC 105917 / EY 4224 / RW1) (Sphingomonas wittichii).